The following is a 225-amino-acid chain: MLTKKQKNLLLFINKKLRASGVSPSYEEMKDSLNLKSKSGIHRLISALEERGFIRRLAHKARALEVIKLPETASANDIYNSFSPSVIKGGLDTENTNLNEMEIPVLGSIAAGTPVEAIQNEVSRIPLPSNLEKNGQYFGLKVQGDSMIEAGINEGDTVIIKRSDTADNGKIVVALIDEHEAMLKRIRRKGKTVALESANRNYETKIFGPDRVKVQGVLVSLYRNF.

The H-T-H motif DNA-binding region spans 26–46; it reads YEEMKDSLNLKSKSGIHRLIS. Active-site for autocatalytic cleavage activity residues include Ser146 and Lys184.

It belongs to the peptidase S24 family. Homodimer.

It carries out the reaction Hydrolysis of Ala-|-Gly bond in repressor LexA.. In terms of biological role, represses a number of genes involved in the response to DNA damage (SOS response), including recA and lexA. In the presence of single-stranded DNA, RecA interacts with LexA causing an autocatalytic cleavage which disrupts the DNA-binding part of LexA, leading to derepression of the SOS regulon and eventually DNA repair. This Pelagibacter ubique (strain HTCC1062) protein is LexA repressor.